Consider the following 88-residue polypeptide: Class II hydrophobin 1 (88 aa).

The first 15 residues, 1–15, serve as a signal peptide directing secretion; the sequence is MKFFIATIFATGALA. Cystine bridges form between Cys19/Cys69, Cys29/Cys59, Cys30/Cys42, and Cys70/Cys81.

It belongs to the cerato-ulmin hydrophobin family. Homodimer. Homodimers further self-assemble to form highly ordered films at water-air interfaces through intermolecular interactions.

Its subcellular location is the secreted. It localises to the cell wall. Functionally, aerial growth, conidiation, and dispersal of filamentous fungi in the environment rely upon a capability of their secreting small amphipathic proteins called hydrophobins (HPBs) with low sequence identity. Class I can self-assemble into an outermost layer of rodlet bundles on aerial cell surfaces, conferring cellular hydrophobicity that supports fungal growth, development and dispersal; whereas Class II form highly ordered films at water-air interfaces through intermolecular interactions but contribute nothing to the rodlet structure. The sequence is that of Class II hydrophobin 1 from Trichoderma asperellum (strain ATCC 204424 / CBS 433.97 / NBRC 101777).